A 1013-amino-acid polypeptide reads, in one-letter code: Ephrin type-A receptor 5 (1013 aa).

Residues 1 to 31 (MGLRGGGGRAGGPAPGWTCLLLCAALRSLLA) form the signal peptide. The Extracellular portion of the chain corresponds to 32–549 (SPGSEVNLLD…AASSDQSQIP (518 aa)). The region spanning 36 to 214 (EVNLLDSRTV…YYKKCPSVIR (179 aa)) is the Eph LBD domain. 6 N-linked (GlcNAc...) asparagine glycosylation sites follow: N240, N275, N345, N399, N412, and N437. Fibronectin type-III domains are found at residues 333 to 443 (PPSA…TNQA) and 444 to 538 (APSP…TSPV). The helical transmembrane segment at 550–570 (IIVVSVTVGVILLAVVIGFLL) threads the bilayer. The Cytoplasmic segment spans residues 571–1013 (SGSCCDHGCG…VQLVNGMVPL (443 aa)). Phosphotyrosine; by autocatalysis is present on residues Y626 and Y632. Residues 651 to 912 (ITIERVIGAG…EIVSMLDKLI (262 aa)) enclose the Protein kinase domain. ATP-binding positions include 657 to 665 (IGAGEFGEV) and K683. Residue D776 is the Proton acceptor of the active site. 2 positions are modified to phosphotyrosine; by autocatalysis: Y809 and Y958. An SAM domain is found at 941-1013 (GAYRSVGEWL…VQLVNGMVPL (73 aa)). The PDZ-binding motif lies at 1011-1013 (VPL).

The protein belongs to the protein kinase superfamily. Tyr protein kinase family. Ephrin receptor subfamily. In terms of assembly, heterotetramer upon binding of the ligand. The heterotetramer is composed of an ephrin dimer and a receptor dimer. Oligomerization is probably required to induce biological responses. Post-translationally, phosphorylated. Phosphorylation is stimulated by the ligand EFNA5. As to expression, detected in the 10-day embryonic brain, weaker expression in the rest of the 10-day embryo. Undetected in adult tissues.

Its subcellular location is the cell membrane. It is found in the cell projection. It localises to the axon. The protein resides in the dendrite. It carries out the reaction L-tyrosyl-[protein] + ATP = O-phospho-L-tyrosyl-[protein] + ADP + H(+). Functionally, receptor tyrosine kinase which binds promiscuously GPI-anchored ephrin-A family ligands residing on adjacent cells, leading to contact-dependent bidirectional signaling into neighboring cells. The signaling pathway downstream of the receptor is referred to as forward signaling while the signaling pathway downstream of the ephrin ligand is referred to as reverse signaling. Among GPI-anchored ephrin-A ligands, EFNA5 most probably constitutes the cognate/functional ligand for EPHA5. Functions as an axon guidance molecule during development and may be involved in the development of the retinotectal, entorhino-hippocampal and hippocamposeptal pathways. Together with EFNA5 plays also a role in synaptic plasticity in adult brain through regulation of synaptogenesis. In Gallus gallus (Chicken), this protein is Ephrin type-A receptor 5 (EPHA5).